Reading from the N-terminus, the 336-residue chain is Holliday junction branch migration complex subunit RuvB (336 aa).

Residues 4–185 (MDERLLSGES…FGVLSRLEYY (182 aa)) form a large ATPase domain (RuvB-L) region. Residues leucine 24, arginine 25, glycine 66, lysine 69, threonine 70, threonine 71, 132–134 (EDF), arginine 175, tyrosine 185, and arginine 222 contribute to the ATP site. Threonine 70 lines the Mg(2+) pocket. The segment at 186–256 (TVDQLSAIVE…ITQMALELLQ (71 aa)) is small ATPAse domain (RuvB-S). Positions 259–336 (KLGLDHIDHK…EHFGMEMPKV (78 aa)) are head domain (RuvB-H). The DNA site is built by arginine 314 and arginine 319.

Belongs to the RuvB family. As to quaternary structure, homohexamer. Forms an RuvA(8)-RuvB(12)-Holliday junction (HJ) complex. HJ DNA is sandwiched between 2 RuvA tetramers; dsDNA enters through RuvA and exits via RuvB. An RuvB hexamer assembles on each DNA strand where it exits the tetramer. Each RuvB hexamer is contacted by two RuvA subunits (via domain III) on 2 adjacent RuvB subunits; this complex drives branch migration. In the full resolvosome a probable DNA-RuvA(4)-RuvB(12)-RuvC(2) complex forms which resolves the HJ.

It is found in the cytoplasm. It carries out the reaction ATP + H2O = ADP + phosphate + H(+). The RuvA-RuvB-RuvC complex processes Holliday junction (HJ) DNA during genetic recombination and DNA repair, while the RuvA-RuvB complex plays an important role in the rescue of blocked DNA replication forks via replication fork reversal (RFR). RuvA specifically binds to HJ cruciform DNA, conferring on it an open structure. The RuvB hexamer acts as an ATP-dependent pump, pulling dsDNA into and through the RuvAB complex. RuvB forms 2 homohexamers on either side of HJ DNA bound by 1 or 2 RuvA tetramers; 4 subunits per hexamer contact DNA at a time. Coordinated motions by a converter formed by DNA-disengaged RuvB subunits stimulates ATP hydrolysis and nucleotide exchange. Immobilization of the converter enables RuvB to convert the ATP-contained energy into a lever motion, pulling 2 nucleotides of DNA out of the RuvA tetramer per ATP hydrolyzed, thus driving DNA branch migration. The RuvB motors rotate together with the DNA substrate, which together with the progressing nucleotide cycle form the mechanistic basis for DNA recombination by continuous HJ branch migration. Branch migration allows RuvC to scan DNA until it finds its consensus sequence, where it cleaves and resolves cruciform DNA. The protein is Holliday junction branch migration complex subunit RuvB of Bacillus cereus (strain ZK / E33L).